A 191-amino-acid polypeptide reads, in one-letter code: Protein YceI (191 aa).

The signal sequence occupies residues methionine 1–alanine 22.

It belongs to the UPF0312 family. Type 1 subfamily.

Its subcellular location is the periplasm. The sequence is that of Protein YceI from Shigella flexneri.